A 207-amino-acid chain; its full sequence is MINLRRFTKFTLAGLTALSLLGGCSVTPKVALQPVSVENASDAKAWELKGKLLIRTNGDKVSANLFWLNTPDNAELRLTSMLGTTVLLLTQNRDGATLEVDGKRYSDLSPQRLLDGLSGFTLPIDALPFWITGQPMAGDEVEFDTLNRPKTIISADGEWTINISSWQTQSGAPVPRMLELTHASAVIKLQTNEWQALANATGSKGAR.

An N-terminal signal peptide occupies residues 1-23 (MINLRRFTKFTLAGLTALSLLGG). The N-palmitoyl cysteine moiety is linked to residue Cys-24. Cys-24 carries S-diacylglycerol cysteine lipidation.

It belongs to the LolB family. Monomer.

The protein resides in the cell outer membrane. Plays a critical role in the incorporation of lipoproteins in the outer membrane after they are released by the LolA protein. In Shewanella amazonensis (strain ATCC BAA-1098 / SB2B), this protein is Outer-membrane lipoprotein LolB.